Consider the following 195-residue polypeptide: Interferon tau (195 aa).

A signal peptide spans 1–23 (MAFVLSLLMALVLASYSPGGSLG). Cystine bridges form between C24–C122 and C52–C162.

Belongs to the alpha/beta interferon family. IFN-alphaII subfamily. As to expression, constitutively and exclusively expressed in the mononuclear cells of the extraembryonic trophectoderm.

It localises to the secreted. In terms of biological role, paracrine hormone primarily responsible for maternal recognition of pregnancy. Interacts with endometrial receptors, probably type I interferon receptors, and blocks estrogen receptor expression, preventing the estrogen-induced increase in oxytocin receptor expression in the endometrium. This results in the suppression of the pulsatile endometrial release of the luteolytic hormone prostaglandin F2-alpha, hindering the regression of the corpus luteum (luteolysis) and therefore a return to ovarian cyclicity. This, and a possible direct effect of IFN-tau on prostaglandin synthesis, leads in turn to continued ovarian progesterone secretion, which stimulates the secretion by the endometrium of the nutrients required for the growth of the conceptus. In summary, displays particularly high antiviral and antiproliferative potency concurrently with particular weak cytotoxicity, high antiluteolytic activity and immunomodulatory properties. In contrast with other IFNs, IFN-tau is not virally inducible. This Cervus elaphus (Red deer) protein is Interferon tau (IFNT).